The following is a 726-amino-acid chain: WD repeat-containing and planar cell polarity effector protein fritz homolog (726 aa).

WD repeat units follow at residues 305–343 and 344–383; these read LRSKAISCCKNSTEDKLIVGCEDSSVILYEAHRGVTLLA and QAELMPSLISCHPSGAILLVGSNQGELQVFDIALSPINIQ. Residues 642-660 show a composition bias toward polar residues; sequence SSGSTPKHTIQQKIPNGPS. The tract at residues 642-717 is disordered; it reads SSGSTPKHTI…RRQDTEDVGS (76 aa). Over residues 672-685 the composition is skewed to acidic residues; sequence MEETEEEEEEEEEA. Residues 701–712 are compositionally biased toward basic and acidic residues; it reads GELREDHRRQDT.

Belongs to the WD repeat fritz family. In terms of assembly, component of the CPLANE (ciliogenesis and planar polarity effectors) complex, composed of INTU, FUZ and WDPCP. Interacts with CPLANE1.

It is found in the cell membrane. It localises to the cytoplasm. The protein resides in the cytoskeleton. Its subcellular location is the cilium axoneme. The protein localises to the cilium basal body. Probable effector of the planar cell polarity signaling pathway which regulates the septin cytoskeleton in both ciliogenesis and collective cell movements. Together with FUZ and WDPCP proposed to function as core component of the CPLANE (ciliogenesis and planar polarity effectors) complex involved in the recruitment of peripheral IFT-A proteins to basal bodies. Binds phosphatidylinositol 3-phosphate with highest affinity, followed by phosphatidylinositol 4-phosphate and phosphatidylinositol 5-phosphate. The protein is WD repeat-containing and planar cell polarity effector protein fritz homolog (Wdpcp) of Rattus norvegicus (Rat).